Consider the following 293-residue polypeptide: Probable adenylate kinase 1, chloroplastic (293 aa).

The N-terminal 26 residues, 1 to 26, are a transit peptide targeting the mitochondrion; that stretch reads MAAVQRLLRASASGGAAAAAAAARRR. 70–75 provides a ligand contact to ATP; sequence GVGKGT. An NMP region spans residues 90–119; it reads ATGDLVRDELASSGPLSVQLAEIVNQGKLV. Residues threonine 91, arginine 96, 117 to 119, 147 to 150, and glutamine 154 contribute to the AMP site; these read KLV and GFPR. The segment at 183 to 231 is LID; sequence GRRICGQCGKNFNLACIDVKGENGLPPIYMAPLLPPNNCMSKLITRADD. ATP contacts are provided by residues arginine 184 and 193–194; that span reads NF. AMP-binding residues include arginine 228 and arginine 239.

The protein belongs to the adenylate kinase family.

It is found in the mitochondrion. It catalyses the reaction AMP + ATP = 2 ADP. Its function is as follows. Catalyzes the reversible transfer of the terminal phosphate group between ATP and AMP. Plays an important role in cellular energy homeostasis and in adenine nucleotide metabolism. The polypeptide is Probable adenylate kinase 1, chloroplastic (Oryza sativa subsp. japonica (Rice)).